A 692-amino-acid chain; its full sequence is MSNDNKDLFSVLNHAQSRIDRKENTQYTSAHSEIVVPAVPLSSPHHHKEDSTYNASSIRILEGLEPVRLRPGMYIGGTDSKALHHLFSEIIDNAMDEAVAGYADLIDITLDSNNYLTVTDNGRGIPIENHPQIPDKSTLEVIMTHLHSGGKFDGKAYQTSGGLHGVGISVVNALSDDMEVEVARERKLYRQRFSRGIPQSGLEELGDVYNRRGTRVCFHPDSQIFGENTAFDPEKIYKIARSKAYLFNGVKIRWNCDPAALKDAKNIPEKDVFYFPDGLKDYLSLSLKNKHLVTAEIFSGKTQQLSGHGSVEWAIAWHNGDAYIQSYCNTIPTEEGGTHETGLRQTLLRGLKAYAELIGNKRASIITSDDVMASTVVMLSVFIKDPQFVGQTKDRLATTEAQRIVENAIRDPFDHWLANSPHEATKLLNWVIERAEERLKRRQDREINRKTAVRKLRLPGKLADCSQNSAAGAELFIVEGDSAGGSAKQARNRTNQAILPLRGKILNVASAAREKMSSSQTIADLILALGCGTRSKYREEDLRYERIIIMTDADVDGAHIASLLITFFFQEIPDLIRAGHLYLAVPPLYRISQGGKVAYARDDSHKDELLKTEFTGKGKIEIGRFKGLGEMRAEQLKETTMNPKKRTLLRVSIDTFEMQETKETVQNLMGTKPEERFRFIQESSTFANNLDI.

ATP contacts are provided by residues Tyr53, Asn93, Asp120, 162–168, and Lys393; that span reads GLHGVGI. The Toprim domain occupies 473 to 587; it reads AELFIVEGDS…AGHLYLAVPP (115 aa). Mg(2+)-binding residues include Glu479, Asp552, and Asp554.

Belongs to the type II topoisomerase family. ParE type 1 subfamily. As to quaternary structure, heterotetramer composed of ParC and ParE. Requires Mg(2+) as cofactor. It depends on Mn(2+) as a cofactor. Ca(2+) is required as a cofactor.

It carries out the reaction ATP-dependent breakage, passage and rejoining of double-stranded DNA.. Its function is as follows. Topoisomerase IV is essential for chromosome segregation. It relaxes supercoiled DNA. Performs the decatenation events required during the replication of a circular DNA molecule. This chain is DNA topoisomerase 4 subunit B, found in Bartonella bacilliformis (strain ATCC 35685 / KC583 / Herrer 020/F12,63).